The sequence spans 35 residues: Photosystem II reaction center protein T (35 aa).

A helical transmembrane segment spans residues 3 to 23 (ALVYTFLLVSTLGIIFFAIFF).

This sequence belongs to the PsbT family. In terms of assembly, PSII is composed of 1 copy each of membrane proteins PsbA, PsbB, PsbC, PsbD, PsbE, PsbF, PsbH, PsbI, PsbJ, PsbK, PsbL, PsbM, PsbT, PsbY, PsbZ, Psb30/Ycf12, at least 3 peripheral proteins of the oxygen-evolving complex and a large number of cofactors. It forms dimeric complexes.

It localises to the plastid. Its subcellular location is the chloroplast thylakoid membrane. Its function is as follows. Found at the monomer-monomer interface of the photosystem II (PS II) dimer, plays a role in assembly and dimerization of PSII. PSII is a light-driven water plastoquinone oxidoreductase, using light energy to abstract electrons from H(2)O, generating a proton gradient subsequently used for ATP formation. The polypeptide is Photosystem II reaction center protein T (Cycas revoluta (Sago palm)).